A 315-amino-acid chain; its full sequence is Methionyl-tRNA formyltransferase (315 aa).

113–116 (SLLP) serves as a coordination point for (6S)-5,6,7,8-tetrahydrofolate.

Belongs to the Fmt family.

The catalysed reaction is L-methionyl-tRNA(fMet) + (6R)-10-formyltetrahydrofolate = N-formyl-L-methionyl-tRNA(fMet) + (6S)-5,6,7,8-tetrahydrofolate + H(+). In terms of biological role, attaches a formyl group to the free amino group of methionyl-tRNA(fMet). The formyl group appears to play a dual role in the initiator identity of N-formylmethionyl-tRNA by promoting its recognition by IF2 and preventing the misappropriation of this tRNA by the elongation apparatus. This is Methionyl-tRNA formyltransferase from Salmonella dublin (strain CT_02021853).